The following is a 451-amino-acid chain: Ammonium transporter Rh type B (451 aa).

The Cytoplasmic segment spans residues 1-11 (MADVSTSMRLK). Residues 12-32 (LPVVCFILEIILIILFGALVQ) form a helical membrane-spanning segment. The Extracellular portion of the chain corresponds to 33-63 (YDYETDAKEWHNQSHNDYENDFYFRYPSFQD). N-linked (GlcNAc...) asparagine glycosylation is present at Asn44. A helical transmembrane segment spans residues 64–84 (VHVMIFIGFGFLMTFLQKYGF). Over 85–87 (GSV) the chain is Cytoplasmic. A helical membrane pass occupies residues 88-108 (GFNFLIAAFSLQWATLMQGFF). The Extracellular segment spans residues 109-121 (HGMHGGKIHVGVE). The helical transmembrane segment at 122–142 (SMINADFCTGSVLISFGAVLG) threads the bilayer. Over 143 to 151 (KTSPIQLLT) the chain is Cytoplasmic. A helical transmembrane segment spans residues 152-172 (MAMFEVTLFAVNEFILLSLLG). Over 173 to 176 (TRDA) the chain is Extracellular. A helical membrane pass occupies residues 177 to 197 (GGSMTIHTFGAYFGLMVTRIL). The Cytoplasmic portion of the chain corresponds to 198–216 (YRPHLDKSKHRNSSVYHSD). The helical transmembrane segment at 217–237 (LFAMIGTIYLWMFWPSFNSAI) threads the bilayer. At 238-247 (TAHGDDQHRT) the chain is on the extracellular side. The chain crosses the membrane as a helical span at residues 248–270 (ALNTYYSLAACTLATYGMSAVTS). The Cytoplasmic portion of the chain corresponds to 271–274 (HDGK). Residues 275–295 (LDMVHIQNAALAGGVAVGTAG) traverse the membrane as a helical segment. The Extracellular segment spans residues 296–298 (EMM). Residues 299–319 (LTPFGSMIVGFLAGIISVLGF) traverse the membrane as a helical segment. The Cytoplasmic portion of the chain corresponds to 320 to 340 (KFLSPILESKLKIQDTCGVHN). Residues 341 to 361 (LHGMPGVLGAIVGAVTAALAT) traverse the membrane as a helical segment. Topologically, residues 362–390 (MDVYGKGMEDVFPAVADGSIDASKQGGVQ) are extracellular. A helical transmembrane segment spans residues 391–411 (ALSLAITLGIALLGGLIVVFG). Topologically, residues 412 to 451 (TPPDTLCFEDGVYWEVPESEAPHEAQLTTVRTEETEKLSS) are cytoplasmic.

This sequence belongs to the ammonium transporter (TC 2.A.49) family. Rh subfamily.

It localises to the basolateral cell membrane. Its subcellular location is the cytoplasmic vesicle membrane. Functionally, functions as an ammonia transporter. May play a role in the elimination of ammonia in the gill. The polypeptide is Ammonium transporter Rh type B (rhbg) (Tetraodon nigroviridis (Spotted green pufferfish)).